The primary structure comprises 176 residues: MKIQDYTKQMVDEKSFIDMAYTLLNDKGETMNLYDIIDEFRALGDYEYEEIENRVVQFYTDLNTDGRFLNVGENLWGLRDWYSVDDIEEKIAPTIQKFDILDADDEEDQNLKLLGEDEMDDDDDIPAQTDDQEELNDPEDEQVEEEINHSDIVIEEDEDELDEDEEVFEDEEDFND.

In terms of domain architecture, HTH HARE-type spans 14–81; it reads KSFIDMAYTL…GENLWGLRDW (68 aa). The interval 114 to 176 is disordered; the sequence is LGEDEMDDDD…VFEDEEDFND (63 aa). Composition is skewed to acidic residues over residues 116-145 and 153-176; these read EDEMDDDDDIPAQTDDQEELNDPEDEQVEE and VIEEDEDELDEDEEVFEDEEDFND.

This sequence belongs to the RpoE family. As to quaternary structure, RNAP is composed of a core of 2 alpha, a beta and a beta' subunits. The core is associated with a delta subunit and one of several sigma factors.

Its function is as follows. Participates in both the initiation and recycling phases of transcription. In the presence of the delta subunit, RNAP displays an increased specificity of transcription, a decreased affinity for nucleic acids, and an increased efficiency of RNA synthesis because of enhanced recycling. The sequence is that of Probable DNA-directed RNA polymerase subunit delta from Staphylococcus aureus (strain JH1).